We begin with the raw amino-acid sequence, 365 residues long: Cobalt-precorrin-5B C(1)-methyltransferase (365 aa).

Belongs to the CbiD family.

The enzyme catalyses Co-precorrin-5B + S-adenosyl-L-methionine = Co-precorrin-6A + S-adenosyl-L-homocysteine. It functions in the pathway cofactor biosynthesis; adenosylcobalamin biosynthesis; cob(II)yrinate a,c-diamide from sirohydrochlorin (anaerobic route): step 6/10. Catalyzes the methylation of C-1 in cobalt-precorrin-5B to form cobalt-precorrin-6A. This chain is Cobalt-precorrin-5B C(1)-methyltransferase, found in Methanococcus maripaludis (strain C5 / ATCC BAA-1333).